A 282-amino-acid chain; its full sequence is 2-dehydro-3-deoxyphosphooctonate aldolase (282 aa).

It belongs to the KdsA family.

Its subcellular location is the cytoplasm. The catalysed reaction is D-arabinose 5-phosphate + phosphoenolpyruvate + H2O = 3-deoxy-alpha-D-manno-2-octulosonate-8-phosphate + phosphate. The protein operates within carbohydrate biosynthesis; 3-deoxy-D-manno-octulosonate biosynthesis; 3-deoxy-D-manno-octulosonate from D-ribulose 5-phosphate: step 2/3. Its pathway is bacterial outer membrane biogenesis; lipopolysaccharide biosynthesis. This Shewanella sp. (strain W3-18-1) protein is 2-dehydro-3-deoxyphosphooctonate aldolase.